Consider the following 423-residue polypeptide: 26S proteasome regulatory subunit 6A homolog (423 aa).

211-218 (GPPGTGKT) contributes to the ATP binding site.

It belongs to the AAA ATPase family.

Its subcellular location is the cytoplasm. It is found in the nucleus. Functionally, the 26S proteasome is involved in the ATP-dependent degradation of ubiquitinated proteins. The regulatory (or ATPase) complex confers ATP dependency and substrate specificity to the 26S complex. The protein is 26S proteasome regulatory subunit 6A homolog (TBP1) of Solanum lycopersicum (Tomato).